A 181-amino-acid chain; its full sequence is Putative D-tyrosyl-tRNA(Tyr) deacylase 2 (181 aa).

This sequence belongs to the DTD family. Highly divergent. In terms of assembly, homodimer.

The protein localises to the cytoplasm. May hydrolyze D-tyrosyl-tRNA(Tyr) into D-tyrosine and free tRNA(Tyr). Could be a defense mechanism against a harmful effect of D-tyrosine. The protein is Putative D-tyrosyl-tRNA(Tyr) deacylase 2 of Leishmania major.